The chain runs to 250 residues: DNA repair protein RecO (250 aa).

It belongs to the RecO family.

Involved in DNA repair and RecF pathway recombination. The polypeptide is DNA repair protein RecO (Rhodopseudomonas palustris (strain TIE-1)).